Consider the following 312-residue polypeptide: Ribosomal protein L11 methyltransferase (312 aa).

Positions 162, 183, 205, and 248 each coordinate S-adenosyl-L-methionine.

The protein belongs to the methyltransferase superfamily. PrmA family.

Its subcellular location is the cytoplasm. It catalyses the reaction L-lysyl-[protein] + 3 S-adenosyl-L-methionine = N(6),N(6),N(6)-trimethyl-L-lysyl-[protein] + 3 S-adenosyl-L-homocysteine + 3 H(+). Its function is as follows. Methylates ribosomal protein L11. The polypeptide is Ribosomal protein L11 methyltransferase (Anoxybacillus flavithermus (strain DSM 21510 / WK1)).